Reading from the N-terminus, the 599-residue chain is Kelch repeat and BTB domain-containing protein 8 (599 aa).

Positions 1 to 25 (MAASADLSKSSPTPNGIPSSDTAND) are disordered. The span at 7–25 (LSKSSPTPNGIPSSDTAND) shows a compositional bias: polar residues. The 69-residue stretch at 49 to 117 (TDIVVEVDHG…AYTSRVILTE (69 aa)) folds into the BTB domain. Residues 152-254 (SIGVFIFADH…MEDTFIEKIP (103 aa)) form the BACK domain. 5 Kelch repeats span residues 334-388 (DIYI…YCCG), 389-439 (KMYA…EHKE), 441-479 (IYVL…VYKD), 481-530 (IYYI…LFQN), and 540-586 (QVTV…FECA).

It belongs to the KBTBD8 family. In terms of assembly, component of the BCR(KBTBD8) E3 ubiquitin ligase complex, at least composed of CUL3, KBTBD8 and RBX1.

It localises to the cytoplasm. Its subcellular location is the cytoskeleton. The protein resides in the spindle. The protein localises to the golgi apparatus. Substrate-specific adapter of a BCR (BTB-CUL3-RBX1) E3 ubiquitin ligase complex that acts as a regulator of neural crest specification. The BCR(KBTBD8) complex acts by mediating monoubiquitination of NOLC1 and TCOF1: monoubiquitination promotes the formation of a NOLC1-TCOF1 complex that acts as a platform to connect RNA polymerase I with enzymes responsible for ribosomal processing and modification, leading to remodel the translational program of differentiating cells in favor of neural crest specification. The chain is Kelch repeat and BTB domain-containing protein 8 (Kbtbd8) from Mus musculus (Mouse).